The primary structure comprises 727 residues: Centrosomal protein kizuna (727 aa).

The segment at 1 to 20 (MTERSGRGGGTRGASALPSP) is disordered. Residues 77–124 (KNARIRNQEYLKQFERIQANITASLEKLQELKIEFETQIKKMQLLSKD) adopt a coiled-coil conformation. Disordered regions lie at residues 176-226 (DFTT…NKSD), 271-456 (EGKK…FTNL), and 564-727 (RLAV…PRTP). Residues 198 to 223 (HQQTAQSSDVTGSRVVQTPGDTQCLN) show a composition bias toward polar residues. Residues 286–324 (LSPENRTTDLKCDSSRRSEGSEGEILTREHIEVEEERAR) show a composition bias toward basic and acidic residues. The residue at position 328 (serine 328) is a Phosphoserine. Residues 343–359 (PQEKPPARKASSDHLPC) show a composition bias toward basic and acidic residues. The span at 380–390 (LSSSSDLTVSV) shows a compositional bias: low complexity. The residue at position 387 (threonine 387) is a Phosphothreonine; by PLK1. Polar residues predominate over residues 442-455 (APSTPDSPNESFTN). Residues 569–583 (SSKSSCSLPSTPSDE) show a composition bias toward low complexity. A compositionally biased stretch (acidic residues) spans 603-613 (QEDESREESTE). The segment covering 631–642 (LKQSALQGSTHQ) has biased composition (polar residues). 2 stretches are compositionally biased toward low complexity: residues 659-669 (GLKTGSGTFKT) and 677-689 (SEAS…GSPL). 3 positions are modified to phosphoserine: serine 711, serine 714, and serine 716.

Belongs to the kizuna family. In terms of assembly, interacts with AKAP9, CEP72, ODF2, PCNT and TUBGCP2. In terms of processing, phosphorylation at Thr-387 by PLK1 is not needed for centrosomal localization or pericentriolar material expansion but is indispensable for spindle-pole stabilization.

It is found in the cytoplasm. Its subcellular location is the cytoskeleton. It localises to the microtubule organizing center. The protein resides in the centrosome. The protein localises to the cilium basal body. Centrosomal protein required for establishing a robust mitotic centrosome architecture that can endure the forces that converge on the centrosomes during spindle formation. Required for stabilizing the expanded pericentriolar material around the centriole. This Bos taurus (Bovine) protein is Centrosomal protein kizuna (KIZ).